A 238-amino-acid polypeptide reads, in one-letter code: Ribosomal RNA small subunit methyltransferase G (238 aa).

Residues Gly-80, 131–132, and Arg-148 each bind S-adenosyl-L-methionine; that span reads AE.

The protein belongs to the methyltransferase superfamily. RNA methyltransferase RsmG family.

Its subcellular location is the cytoplasm. In terms of biological role, specifically methylates the N7 position of a guanine in 16S rRNA. The protein is Ribosomal RNA small subunit methyltransferase G of Thermotoga maritima (strain ATCC 43589 / DSM 3109 / JCM 10099 / NBRC 100826 / MSB8).